A 122-amino-acid chain; its full sequence is uncharacterized protein (122 aa).

2 disordered regions span residues 1-30 (MGRE…DQPE) and 96-122 (FKSC…DAMG).

This is an uncharacterized protein from Homo sapiens (Human).